The chain runs to 250 residues: Peptidyl-tRNA hydrolase (250 aa).

Residue Tyr-14 participates in tRNA binding. His-19 (proton acceptor) is an active-site residue. Residues Phe-64, Asn-66, and Asn-112 each contribute to the tRNA site. A disordered region spans residues 192–250 (MGDGNQRPGGVKTDPAQLEKAPPKAQSHIRQARQNQKKPNIPESGPMAEMLKKLLGKKD). The segment covering 219 to 229 (HIRQARQNQKK) has biased composition (polar residues). The span at 241–250 (MLKKLLGKKD) shows a compositional bias: basic and acidic residues.

It belongs to the PTH family. In terms of assembly, monomer.

The protein resides in the cytoplasm. It carries out the reaction an N-acyl-L-alpha-aminoacyl-tRNA + H2O = an N-acyl-L-amino acid + a tRNA + H(+). In terms of biological role, hydrolyzes ribosome-free peptidyl-tRNAs (with 1 or more amino acids incorporated), which drop off the ribosome during protein synthesis, or as a result of ribosome stalling. Its function is as follows. Catalyzes the release of premature peptidyl moieties from peptidyl-tRNA molecules trapped in stalled 50S ribosomal subunits, and thus maintains levels of free tRNAs and 50S ribosomes. The sequence is that of Peptidyl-tRNA hydrolase from Brucella suis (strain ATCC 23445 / NCTC 10510).